A 561-amino-acid polypeptide reads, in one-letter code: Putative cysteine ligase BshC (561 aa).

Positions L472–L517 form a coiled coil.

Belongs to the BshC family.

This Chloroherpeton thalassium (strain ATCC 35110 / GB-78) protein is Putative cysteine ligase BshC.